The primary structure comprises 363 residues: Flagellar P-ring protein (363 aa).

Positions 1 to 20 (MKKFTLLLLCFVLPMTSAYA) are cleaved as a signal peptide.

Belongs to the FlgI family. The basal body constitutes a major portion of the flagellar organelle and consists of four rings (L,P,S, and M) mounted on a central rod.

The protein resides in the periplasm. Its subcellular location is the bacterial flagellum basal body. Its function is as follows. Assembles around the rod to form the L-ring and probably protects the motor/basal body from shearing forces during rotation. The chain is Flagellar P-ring protein from Vibrio vulnificus (strain YJ016).